The sequence spans 316 residues: Apolipoprotein E (316 aa).

The first 18 residues, 1–18 (MKVLWVAVVVALLAGCQA), serve as a signal peptide directing secretion. Thr-32 carries an O-linked (GalNAc...) threonine glycan. Tandem repeats lie at residues 79–100 (ALME…GQLG), 101–122 (PMAQ…ARLG), 123–144 (SDME…AMLG), 145–166 (QSTE…KRLL), 167–188 (RDAD…EGAE), 189–210 (RSLS…SRAA), 211–232 (TLST…QKLH), and 233–254 (GRLE…QQLE). An 8 X 22 AA approximate tandem repeats region spans residues 79 to 254 (ALMEETMKEV…RLDKIRQQLE (176 aa)). Met-142 carries the methionine sulfoxide modification. The residue at position 146 (Ser-146) is a Phosphoserine. Residues 157-167 (HLRKLPKRLLR) are LDL and other lipoprotein receptors binding. Heparin is bound at residue 161–164 (LPKR). The interval 209-289 (AATLSTLAGQ…SWFEPLVEDM (81 aa)) is lipid-binding and lipoprotein association. O-linked (GalNAc...) threonine glycosylation is present at Thr-211. 228 to 235 (RQKLHGRL) serves as a coordination point for heparin. Positions 265 to 316 (NQMRLQAEAFQARLRSWFEPLVEDMQRQWAGLVEKVQLALRPSPTSPPSENH) are homooligomerization. The specificity for association with VLDL stretch occupies residues 277-289 (RLRSWFEPLVEDM). O-linked (GalNAc...) threonine glycosylation is present at Thr-309. O-linked (GalNAc...) serine glycosylation occurs at Ser-310.

The protein belongs to the apolipoprotein A1/A4/E family. Homotetramer. May interact with ABCA1; functionally associated with ABCA1 in the biogenesis of HDLs. May interact with APP/A4 amyloid-beta peptide; the interaction is extremely stable in vitro but its physiological significance is unclear. May interact with MAPT. May interact with MAP2. In the cerebrospinal fluid, interacts with secreted SORL1. Interacts with PMEL; this allows the loading of PMEL luminal fragment on ILVs to induce fibril nucleation. Post-translationally, APOE exists as multiple glycosylated and sialylated glycoforms within cells and in plasma. The extent of glycosylation and sialylation are tissue and context specific. In terms of processing, glycated in plasma VLDL. Phosphorylated by FAM20C in the extracellular medium.

The protein resides in the secreted. It localises to the extracellular space. It is found in the extracellular matrix. Its subcellular location is the extracellular vesicle. The protein localises to the endosome. The protein resides in the multivesicular body. APOE is an apolipoprotein, a protein associating with lipid particles, that mainly functions in lipoprotein-mediated lipid transport between organs via the plasma and interstitial fluids. APOE is a core component of plasma lipoproteins and is involved in their production, conversion and clearance. Apolipoproteins are amphipathic molecules that interact both with lipids of the lipoprotein particle core and the aqueous environment of the plasma. As such, APOE associates with chylomicrons, chylomicron remnants, very low density lipoproteins (VLDL) and intermediate density lipoproteins (IDL) but shows a preferential binding to high-density lipoproteins (HDL). It also binds a wide range of cellular receptors including the LDL receptor/LDLR and the very low-density lipoprotein receptor/VLDLR that mediate the cellular uptake of the APOE-containing lipoprotein particles. Finally, APOE also has a heparin-binding activity and binds heparan-sulfate proteoglycans on the surface of cells, a property that supports the capture and the receptor-mediated uptake of APOE-containing lipoproteins by cells. The protein is Apolipoprotein E (APOE) of Bos taurus (Bovine).